We begin with the raw amino-acid sequence, 449 residues long: Chitobiosyldiphosphodolichol beta-mannosyltransferase (449 aa).

The Lumenal segment spans residues M1–R7. A helical transmembrane segment spans residues W8–P28. The Dolichol recognition signature appears at L21–Y32. Residues Y29 to T104 are Cytoplasmic-facing. Positions S105–W125 form an intramembrane region, helical. The Cytoplasmic segment spans residues E126–H449. The tract at residues Q435–H449 is required for oligomerization.

This sequence belongs to the glycosyltransferase group 1 family. Glycosyltransferase 33 subfamily. In terms of assembly, homodimer. ALG1 forms mannosyltransferases (MT) heteromeric complexes with either ALG2 or ALG11.

It localises to the endoplasmic reticulum membrane. The catalysed reaction is an N,N'-diacetylchitobiosyl-diphospho-di-trans,poly-cis-dolichol + GDP-alpha-D-mannose = a beta-D-Man-(1-&gt;4)-beta-D-GlcNAc-(1-&gt;4)-alpha-D-GlcNAc-diphospho-di-trans,poly-cis-dolichol + GDP + H(+). It participates in protein modification; protein glycosylation. Functionally, participates in the formation of the lipid-linked precursor oligosaccharide for N-glycosylation. Involved in assembling the dolichol-pyrophosphate-GlcNAc(2)-Man(5) intermediate on the cytoplasmic surface of the ER. In Saccharomyces cerevisiae (strain ATCC 204508 / S288c) (Baker's yeast), this protein is Chitobiosyldiphosphodolichol beta-mannosyltransferase (ALG1).